Here is a 1151-residue protein sequence, read N- to C-terminus: Error-prone DNA polymerase (1151 aa).

Residues 1108 to 1151 (HPVPSGDALIEPLNDDRRDHADAPAQKIRHPRNVRILPPSRDFH) are disordered.

This sequence belongs to the DNA polymerase type-C family. DnaE2 subfamily.

The protein resides in the cytoplasm. The enzyme catalyses DNA(n) + a 2'-deoxyribonucleoside 5'-triphosphate = DNA(n+1) + diphosphate. Its function is as follows. DNA polymerase involved in damage-induced mutagenesis and translesion synthesis (TLS). It is not the major replicative DNA polymerase. The polypeptide is Error-prone DNA polymerase (Bradyrhizobium diazoefficiens (strain JCM 10833 / BCRC 13528 / IAM 13628 / NBRC 14792 / USDA 110)).